The primary structure comprises 447 residues: MSDYPKTPQAAHLTALVELISSSVNEVISVYSAAGRDIPSLDSLEEGFLETPATTPPGLRHARQIIEAACAQLCVTIAQPGDCIVNKAFAYTESACLQVAANAKISDFLADKPDGLHTEELAKLSGVDAGKLGQVLRFLATKHVYREVRPNVYANNRLSVKLMSSDPVSCNVGVCTGELFQAATAAWDTLSDKEYGPSYLPTKTAFRKVHGATFFEYYETHVRLNLPRFSGAMVGWGNITDRGLLPQMYEWQRLEPGATICDVGGNNGHATLDLVKEYPMISVIVQDLESLRPRWSDLWARELPDAIQDGRTSFVPIDFFRDIPVRNCDVYYIRHILHDWPDASCVQILRNVKEAMQPSSRVLIHEYVLQQTTRDDVTVENDSAPEPLLPNYGNGRIRRYYQDITMLLGLNSKERTLQEFIDIGAQAGLKFVKLWDGGQTALVEFSC.

Residues 264–265, D287, 318–319, and R334 contribute to the S-adenosyl-L-methionine site; these read GG and DF. H338 functions as the Proton acceptor in the catalytic mechanism.

Belongs to the class I-like SAM-binding methyltransferase superfamily. Cation-independent O-methyltransferase family. COMT subfamily.

Functionally, S-adenosyl-L-methionine-dependent methyltransferase that preferentially catalyzes the methylation of 3-OH phenolic compounds like isovanillic acid and 3-OH-4-Met cinnamic acid. May play a role in promoting lignin degradation by methylating and inactivating free-hydroxyl phenolic compounds, products of lignin cleavage which are known inhibitors of lignin peroxidases. The chain is 3-O-methyltransferase 2 from Phanerochaete chrysosporium (strain RP-78 / ATCC MYA-4764 / FGSC 9002) (White-rot fungus).